Here is a 445-residue protein sequence, read N- to C-terminus: Methionine aminopeptidase 2-3 (445 aa).

The segment at 14–115 (ISDADANGAD…ENRYRTTSEE (102 aa)) is disordered. Positions 38-47 (EDDDSDDDVA) are enriched in acidic residues. The span at 60 to 75 (AKKKKNKKRKPKKKQP) shows a compositional bias: basic residues. Polar residues predominate over residues 85-95 (PLSQLFPNNTY). The segment covering 97-115 (KGEEVEYKDENRYRTTSEE) has biased composition (basic and acidic residues). Histidine 198 provides a ligand contact to substrate. 3 residues coordinate a divalent metal cation: aspartate 218, aspartate 229, and histidine 298. Residue histidine 306 participates in substrate binding. A divalent metal cation is bound by residues glutamate 331 and glutamate 426.

Belongs to the peptidase M24A family. Methionine aminopeptidase eukaryotic type 2 subfamily. Co(2+) is required as a cofactor. It depends on Zn(2+) as a cofactor. The cofactor is Mn(2+). Requires Fe(2+) as cofactor.

The protein resides in the cytoplasm. It catalyses the reaction Release of N-terminal amino acids, preferentially methionine, from peptides and arylamides.. Its function is as follows. Cotranslationally removes the N-terminal methionine from nascent proteins. The N-terminal methionine is often cleaved when the second residue in the primary sequence is small and uncharged (Met-Ala-, Cys, Gly, Pro, Ser, Thr, or Val). This Neosartorya fischeri (strain ATCC 1020 / DSM 3700 / CBS 544.65 / FGSC A1164 / JCM 1740 / NRRL 181 / WB 181) (Aspergillus fischerianus) protein is Methionine aminopeptidase 2-3.